A 1258-amino-acid polypeptide reads, in one-letter code: Phosphatidylinositol 3,4,5-trisphosphate 5-phosphatase 2 (1258 aa).

The SH2 domain occupies 21 to 117 (WYHRDLSRAA…GLVCALLLPV (97 aa)). Residues 119 to 132 (GEREPDPPDDRDAS) show a composition bias toward basic and acidic residues. The segment at 119–180 (GEREPDPPDD…AESAPNGLST (62 aa)) is disordered. Phosphoserine is present on Ser-132. Polar residues predominate over residues 145–155 (SGSTSISAPTG). The span at 156-166 (PSSPLPAPETP) shows a compositional bias: pro residues. The residue at position 165 (Thr-165) is a Phosphothreonine. Ser-241 and Ser-352 each carry phosphoserine. Phosphotyrosine is present on Tyr-886. Ser-890 is modified (phosphoserine). The segment at 897-1118 (GAKSKAPSVS…FLGEVASGDD (222 aa)) is disordered. The segment covering 938 to 950 (PPPTGRPPAPPRA) has biased composition (pro residues). The SH3-binding signature appears at 944–949 (PPAPPR). The segment covering 951-965 (APREEPLTPRLKPEG) has biased composition (basic and acidic residues). The residue at position 958 (Thr-958) is a Phosphothreonine. Residues 983–986 (NPAY) carry the NPXY motif motif. The residue at position 986 (Tyr-986) is a Phosphotyrosine; by SRC. Pro residues-rich tracts occupy residues 996 to 1007 (LLPPEPPSPARA), 1048 to 1059 (LPPPDFPPPPLP), and 1087 to 1104 (GPPP…PGPS). Residue Ser-1131 is modified to Phosphoserine. Phosphotyrosine is present on residues Tyr-1135 and Tyr-1162. The SAM domain occupies 1196–1258 (LGEAGMSAWL…LLLDTLQLSK (63 aa)). Ser-1257 is modified (phosphoserine).

Belongs to the inositol 1,4,5-trisphosphate 5-phosphatase family. As to quaternary structure, interacts with tyrosine phosphorylated form of SHC1. Interacts with EGFR. Upon stimulation by the EGF signaling pathway, it forms a complex with SHC1 and EGFR. Interacts with cytoskeletal protein SORBS3/vinexin, promoting its localization to the periphery of cells. Forms a complex with filamin (FLNA or FLNB), actin, GPIb (GP1BA or GP1BB) that regulates cortical and submembraneous actin. Interacts with c-Met/MET, when c-Met/MET is phosphorylated on 'Tyr-1356'. Interacts with p130Cas/BCAR1. Interacts with CENTD3/ARAP3 via its SAM domain. Interacts with c-Cbl/CBL and CAP/SORBS1. Interacts with activated EPHA2 receptor. Interacts with receptor FCGR2A. Interacts with receptor FCGR2B. Interacts with tyrosine kinase ABL1. Interacts with tyrosine kinase TEC. Interacts with CSF1R. Interacts (via N-terminus) with SH3YL1 (via SH3 domain). Interacts with FCRL6 (tyrosine phosphorylated form). Interacts (via SH2 domain) with tyrosine phosphorylated KLRC1 (via ITIM). Interacts with NEDD9/HEF1. Post-translationally, tyrosine phosphorylated by the members of the SRC family after exposure to a diverse array of extracellular stimuli such as insulin, growth factors such as EGF or PDGF, chemokines, integrin ligands and hypertonic and oxidative stress. May be phosphorylated upon IgG receptor FCGR2B-binding. Phosphorylated at Tyr-986 following cell attachment and spreading. Phosphorylated at Tyr-1162 following EGF signaling pathway stimulation. Phosphorylated at Thr-958 in response to PDGF. As to expression, widely expressed, most prominently in skeletal muscle, heart and brain. Present in platelets. Expressed in transformed myeloid cells and in primary macrophages, but not in peripheral blood monocytes.

It localises to the cytoplasm. It is found in the cytosol. The protein localises to the cytoskeleton. The protein resides in the membrane. Its subcellular location is the cell projection. It localises to the filopodium. It is found in the lamellipodium. The protein localises to the basal cell membrane. The protein resides in the nucleus. Its subcellular location is the nucleus speckle. It localises to the spindle pole. It carries out the reaction a 1,2-diacyl-sn-glycero-3-phospho-(1D-myo-inositol-3,4,5-trisphosphate) + H2O = a 1,2-diacyl-sn-glycero-3-phospho-(1D-myo-inositol-3,4-bisphosphate) + phosphate. The enzyme catalyses 1,2-dioctanoyl-sn-glycero-3-phospho-(1D-myo-inositol-3,4,5-trisphosphate) + H2O = 1,2-dioctanoyl-sn-glycero-3-phospho-(1D-myo-inositol-3,4-bisphosphate) + phosphate. It catalyses the reaction 1,2-dihexadecanoyl-sn-glycero-3-phospho-(1D-myo-inositol-3,4,5-trisphosphate) + H2O = 1,2-dihexadecanoyl-sn-glycero-3-phospho-(1D-myo-inositol-3,4-bisphosphate) + phosphate. Activated upon translocation to the sites of synthesis of PtdIns(3,4,5)P3 in the membrane. Enzymatic activity is enhanced in the presence of phosphatidylserine. Functionally, phosphatidylinositol (PtdIns) phosphatase that specifically hydrolyzes the 5-phosphate of phosphatidylinositol-3,4,5-trisphosphate (PtdIns(3,4,5)P3) to produce PtdIns(3,4)P2, thereby negatively regulating the PI3K (phosphoinositide 3-kinase) pathways. Required for correct mitotic spindle orientation and therefore progression of mitosis. Plays a central role in regulation of PI3K-dependent insulin signaling, although the precise molecular mechanisms and signaling pathways remain unclear. While overexpression reduces both insulin-stimulated MAP kinase and Akt activation, its absence does not affect insulin signaling or GLUT4 trafficking. Confers resistance to dietary obesity. May act by regulating AKT2, but not AKT1, phosphorylation at the plasma membrane. Part of a signaling pathway that regulates actin cytoskeleton remodeling. Required for the maintenance and dynamic remodeling of actin structures as well as in endocytosis, having a major impact on ligand-induced EGFR internalization and degradation. Participates in regulation of cortical and submembraneous actin by hydrolyzing PtdIns(3,4,5)P3 thereby regulating membrane ruffling. Regulates cell adhesion and cell spreading. Required for HGF-mediated lamellipodium formation, cell scattering and spreading. Acts as a negative regulator of EPHA2 receptor endocytosis by inhibiting via PI3K-dependent Rac1 activation. Acts as a regulator of neuritogenesis by regulating PtdIns(3,4,5)P3 level and is required to form an initial protrusive pattern, and later, maintain proper neurite outgrowth. Acts as a negative regulator of the FC-gamma-RIIA receptor (FCGR2A). Mediates signaling from the FC-gamma-RIIB receptor (FCGR2B), playing a central role in terminating signal transduction from activating immune/hematopoietic cell receptor systems. Involved in EGF signaling pathway. Upon stimulation by EGF, it is recruited by EGFR and dephosphorylates PtdIns(3,4,5)P3. Plays a negative role in regulating the PI3K-PKB pathway, possibly by inhibiting PKB activity. Down-regulates Fc-gamma-R-mediated phagocytosis in macrophages independently of INPP5D/SHIP1. In macrophages, down-regulates NF-kappa-B-dependent gene transcription by regulating macrophage colony-stimulating factor (M-CSF)-induced signaling. Plays a role in the localization of AURKA and NEDD9/HEF1 to the basolateral membrane at interphase in polarized cysts, thereby mediates cell cycle homeostasis, cell polarization and cilia assembly. Additionally promotion of cilia growth is also facilitated by hydrolysis of (PtdIns(3,4,5)P3) to PtdIns(3,4)P2. Promotes formation of apical membrane-initiation sites during the initial stages of lumen formation via Rho family-induced actin filament organization and CTNNB1 localization to cell-cell contacts. May also hydrolyze PtdIns(1,3,4,5)P4, and could thus affect the levels of the higher inositol polyphosphates like InsP6. Involved in endochondral ossification. The protein is Phosphatidylinositol 3,4,5-trisphosphate 5-phosphatase 2 of Homo sapiens (Human).